The following is a 257-amino-acid chain: Probable enoyl-CoA hydratase echA17 (257 aa).

Belongs to the enoyl-CoA hydratase/isomerase family.

It carries out the reaction a (3S)-3-hydroxyacyl-CoA = a (2E)-enoyl-CoA + H2O. The enzyme catalyses a 4-saturated-(3S)-3-hydroxyacyl-CoA = a (3E)-enoyl-CoA + H2O. Could possibly oxidize fatty acids using specific components. The protein is Probable enoyl-CoA hydratase echA17 (echA17) of Mycobacterium avium (strain 104).